The chain runs to 237 residues: Peptidase E (237 aa).

Residues serine 122, aspartate 137, and histidine 159 each act as charge relay system in the active site.

The protein belongs to the peptidase S51 family.

The protein resides in the cytoplasm. The catalysed reaction is Dipeptidase E catalyzes the hydrolysis of dipeptides Asp-|-Xaa. It does not act on peptides with N-terminal Glu, Asn or Gln, nor does it cleave isoaspartyl peptides.. Functionally, hydrolyzes dipeptides containing N-terminal aspartate residues. May play a role in allowing the cell to use peptide aspartate to spare carbon otherwise required for the synthesis of the aspartate family of amino acids. This is Peptidase E from Shewanella baltica (strain OS155 / ATCC BAA-1091).